A 359-amino-acid chain; its full sequence is MDPLGPAKTQWSWRCCLTALLFQLLVAVCFFSYLRVSRDDPTVYPNGSPFPDSTGTPAHSIPLILLWTWPFNKPIALPRCSEMVPGTADCNITADRKVYPQADAVIVHHREVMYNPSAQLPRSPRRQGQRWIWFNLESPSHCWHLKAMDGYFNLTMSYRSDSDIFTPYGWLEPWSGQPAHPPLNLSAKTELVAWAVSNWRPNSARVRYYQSLQAHLKVDVYGRSHKPLPQGTMMETLSRYKFYLAFENSVHPDYITEKLWRNALEAWAVPVVLGPSRSNYERFLPPDAFIHVDDFQSPKDLAQYLQELDKDHARYLSYFRWRETLQPRSCSWALDFCKACWKLQEESRYQTRSIAAWFT.

The Cytoplasmic segment spans residues 1–14 (MDPLGPAKTQWSWR). The helical; Signal-anchor for type II membrane protein transmembrane segment at 15–34 (CCLTALLFQLLVAVCFFSYL) threads the bilayer. Residues 35–359 (RVSRDDPTVY…QTRSIAAWFT (325 aa)) lie on the Lumenal side of the membrane. A determines site-specific fucosylation region spans residues 73-112 (KPIALPRCSEMVPGTADCNITADRKVYPQADAVIVHHREV). Residues asparagine 91, asparagine 153, and asparagine 184 are each glycosylated (N-linked (GlcNAc...) asparagine).

Belongs to the glycosyltransferase 10 family. As to quaternary structure, homodimer and monomer. Monomer (secreted form). N-glycosylated. Post-translationally, proteolytic cleavage releases a secreted glycoform of 43 kDa.

Its subcellular location is the golgi apparatus. It localises to the golgi stack membrane. It is found in the secreted. The catalysed reaction is a beta-D-galactosyl-(1-&gt;4)-N-acetyl-beta-D-glucosaminyl derivative + GDP-beta-L-fucose = a beta-D-galactosyl-(1-&gt;4)-[alpha-L-fucosyl-(1-&gt;3)]-N-acetyl-beta-D-glucosaminyl derivative + GDP + H(+). It catalyses the reaction an N-acetyl-alpha-neuraminyl-(2-&gt;3)-beta-D-galactosyl-(1-&gt;4)-N-acetyl-beta-D-glucosaminyl derivative + GDP-beta-L-fucose = an alpha-Neu5Ac-(2-&gt;3)-beta-D-Gal-(1-&gt;4)-[alpha-L-Fuc-(1-&gt;3)]-beta-D-GlcNAc derivative + GDP + H(+). It carries out the reaction an alpha-Neu5Ac-(2-&gt;3)-beta-D-Gal-(1-&gt;4)-beta-D-GlcNAc-(1-&gt;3)-beta-D-Gal-(1-&gt;4)-[alpha-L-Fuc-(1-&gt;3)]-beta-D-GlcNAc derivative + GDP-beta-L-fucose = an alpha-Neu5Ac-(2-&gt;3)-beta-D-Gal-(1-&gt;4)-[alpha-L-Fuc-(1-&gt;3)]-beta-D-GlcNAc-(1-&gt;3)-beta-D-Gal-(1-&gt;4)-[alpha-L-Fuc-(1-&gt;3)]-beta-D-GlcNAc derivative + GDP + H(+). The enzyme catalyses a neolactoside nLc6Cer + GDP-beta-L-fucose = beta-D-Gal-(1-&gt;4)-[alpha-L-Fuc-(1-&gt;3)]-beta-D-GlcNAc-(1-&gt;3)-beta-D-Gal-(1-&gt;4)-beta-D-GlcNAc-(1-&gt;3)-beta-D-Gal-(1-&gt;4)-beta-D-Glc-(1&lt;-&gt;1')-Cer + GDP + H(+). The catalysed reaction is a neolactoside nLc6Cer + GDP-beta-L-fucose = beta-D-galactosyl-(1-&gt;4)-N-acetyl-beta-D-glucosaminyl-(1-&gt;3)-beta-D-galactosyl-(1-&gt;4)-[alpha-L-fucosyl-(1-&gt;3)]-N-acetyl-beta-D-glucosaminyl-(1-&gt;3)-beta-D-galactosyl-(1-&gt;4)-beta-D-glucosyl-(1&lt;-&gt;1')-ceramide + GDP + H(+). It catalyses the reaction a neolactoside VI(3)-alpha-NeuNAc-nLc6Cer + GDP-beta-L-fucose = a neolactoside VI(3)-alpha-NeuAc,V(3)-alphaFuc-nLc6Cer + GDP + H(+). It carries out the reaction beta-D-galactosyl-(1-&gt;4)-N-acetyl-D-glucosamine + GDP-beta-L-fucose = beta-D-galactosyl-(1-&gt;4)-[alpha-L-fucosyl-(1-&gt;3)]-N-acetyl-D-glucosamine + GDP + H(+). The enzyme catalyses N-acetyl-alpha-neuraminosyl-(2-&gt;3)-beta-D-galactosyl-(1-&gt;4)-N-acetyl-beta-D-glucosamine + GDP-beta-L-fucose = N-acetyl-alpha-neuraminosyl-(2-&gt;3)-beta-D-galactosyl-(1-&gt;4)-[alpha-L-fucosyl-(1-&gt;3)]-N-acetyl-beta-D-glucosamine + GDP + H(+). The catalysed reaction is lactose + GDP-beta-L-fucose = beta-D-galactosyl-(1-&gt;4)-[alpha-L-fucosyl-(1-&gt;3)]-D-glucose + GDP + H(+). It catalyses the reaction alpha-L-Fuc-(1-&gt;2)-beta-D-Gal-(1-&gt;4)-D-Glc + GDP-beta-L-fucose = alpha-L-Fuc-(1-&gt;2)-beta-D-Gal-(1-&gt;4)-[alpha-L-Fuc-(1-&gt;3)]-D-Glc + GDP + H(+). It carries out the reaction a beta-D-galactosyl-(1-&gt;4)-N-acetyl-beta-D-6-sulfooxy-glucosaminyl derivative + GDP-beta-L-fucose = a beta-D-galactosyl-(1-&gt;4)-[alpha-L-fucosyl-(1-&gt;3)]-N-acetyl-beta-D-6-sulfooxy-glucosaminyl derivative + GDP + H(+). It functions in the pathway protein modification; protein glycosylation. Catalyzes the transfer of L-fucose, from a guanosine diphosphate-beta-L-fucose, to the N-acetyl glucosamine (GlcNAc) of a distal alpha2,3 sialylated lactosamine unit of a glycoprotein- or glycolipid-linked sialopolylactosamines chain or of a distal or internal lactosamine unit of a neutral glycoprotein- or glycolipid-linked polylactosamines chain through an alpha-1,3 glycosidic linkage and participates in surface expression of the sialyl Lewis X (sLe(x)), Lewis X (Le(x)) and non sialylated VIM2 determinants. Moreover transfers fucose to H-type 2 (Fucalpha1-2Galbeta1-4GlcNAc) chain acceptor substrates and participates in difucosylated sialyl Lewis x determinants. Also fucosylates a polylactosamine substrate having a 6 sulfate modification at the GlcNAc moiety and gives rise to sialyl and non-sialyl 6-sulfo lewis X. Does not have activity towards type 1 ((Galbeta1-3GlcNAc)) and H-type 1 chain (Fucalpha1-2Galbeta1-3GlcNAc) acceptors substrates. This chain is 4-galactosyl-N-acetylglucosaminide 3-alpha-L-fucosyltransferase FUT6, found in Pongo pygmaeus (Bornean orangutan).